The primary structure comprises 820 residues: Leucine--tRNA ligase (820 aa).

The 'HIGH' region motif lies at P42–H52. The short motif at K576–S580 is the 'KMSKS' region element. Residue K579 participates in ATP binding.

The protein belongs to the class-I aminoacyl-tRNA synthetase family.

It is found in the cytoplasm. The enzyme catalyses tRNA(Leu) + L-leucine + ATP = L-leucyl-tRNA(Leu) + AMP + diphosphate. The protein is Leucine--tRNA ligase of Coxiella burnetii (strain RSA 493 / Nine Mile phase I).